Consider the following 333-residue polypeptide: D-alanine--D-alanine ligase (333 aa).

One can recognise an ATP-grasp domain in the interval 124 to 329 (KMWFSALGIP…FTEYLYSNIK (206 aa)). ATP is bound at residue 154-209 (ALETWGSVFIKAASQGSSVGCYRVDSIDELASSLKEAFSYSPYVVVEKTIHARELE). Residues aspartate 283, glutamate 296, and asparagine 298 each coordinate Mg(2+).

It belongs to the D-alanine--D-alanine ligase family. Mg(2+) is required as a cofactor. Requires Mn(2+) as cofactor.

The protein resides in the cytoplasm. It carries out the reaction 2 D-alanine + ATP = D-alanyl-D-alanine + ADP + phosphate + H(+). The protein operates within cell wall biogenesis; peptidoglycan biosynthesis. Its function is as follows. Cell wall formation. The polypeptide is D-alanine--D-alanine ligase (Shewanella sediminis (strain HAW-EB3)).